The following is a 171-amino-acid chain: MDELKNIIRDIPDFPKKGIIFKDITTLLADAASYQRMVDLLSHRYIGKKIDKVVGVEARGFIIGAALAYKLGAGIVLVRKPGKLPSETFKKSYELEYGTDTLEIHTDAIEKGERVLIADDLLATGGTMAAVVDMVSSMGAELVECCFMAELEFLNGKNKLPADKVFSLLKF.

This sequence belongs to the purine/pyrimidine phosphoribosyltransferase family. In terms of assembly, homodimer.

It localises to the cytoplasm. The catalysed reaction is AMP + diphosphate = 5-phospho-alpha-D-ribose 1-diphosphate + adenine. The protein operates within purine metabolism; AMP biosynthesis via salvage pathway; AMP from adenine: step 1/1. In terms of biological role, catalyzes a salvage reaction resulting in the formation of AMP, that is energically less costly than de novo synthesis. This is Adenine phosphoribosyltransferase from Geotalea uraniireducens (strain Rf4) (Geobacter uraniireducens).